The chain runs to 128 residues: Protein ripply2 (128 aa).

The segment at 1–63 is disordered; it reads MENAGGAEGT…HAAEAMPDGP (63 aa). The segment covering 9–22 has biased composition (low complexity); the sequence is GTESGAAACAATDG. Residues 37 to 40 carry the WRPW motif motif; it reads WRPW. The tract at residues 77–112 is ripply homology domain; the sequence is HPVRLFWPKSKCYDYLYQEAEALLKNFPIQATISFY.

Belongs to the ripply family.

It localises to the nucleus. Plays a role in somitogenesis. Required for somite segregation and establishment of rostrocaudal polarity in somites. The chain is Protein ripply2 (RIPPLY2) from Homo sapiens (Human).